The following is a 192-amino-acid chain: Ion-translocating oxidoreductase complex subunit B (192 aa).

The segment at 1-26 is hydrophobic; that stretch reads MNAIWIAVAAVSLLGLAFGAILGYAS. One can recognise a 4Fe-4S domain in the interval 32–91; that stretch reads EDDPVVEKIDEILPQSQCGQCGYPGCRPYAETISCNGEKINRCAPGGEAVMLKIAELLNV. Positions 49, 52, 57, 74, 117, 120, 123, 127, 147, 150, 153, and 157 each coordinate [4Fe-4S] cluster. 4Fe-4S ferredoxin-type domains are found at residues 108–137 and 138–167; these read MVAV…GATR and AMHT…LQPV.

The protein belongs to the 4Fe4S bacterial-type ferredoxin family. RnfB subfamily. The complex is composed of six subunits: RsxA, RsxB, RsxC, RsxD, RsxE and RsxG. The cofactor is [4Fe-4S] cluster.

The protein resides in the cell inner membrane. Functionally, part of a membrane-bound complex that couples electron transfer with translocation of ions across the membrane. Required to maintain the reduced state of SoxR. The polypeptide is Ion-translocating oxidoreductase complex subunit B (Escherichia coli O6:K15:H31 (strain 536 / UPEC)).